A 1053-amino-acid polypeptide reads, in one-letter code: LRR receptor-like serine/threonine-protein kinase GHR1 (1053 aa).

An N-terminal signal peptide occupies residues 1–18 (MNLSRILLLSMFFLSAMG). The Extracellular portion of the chain corresponds to 19–630 (QLPSQDIMAL…NKSTNKLVKV (612 aa)). 13 LRR repeats span residues 73 to 93 (GVVL…FSNL), 94 to 119 (TKLV…SFKS), 121 to 141 (QFLD…IGRS), 142 to 165 (VSLR…MGGL), 166 to 189 (ISLQ…LTRL), 191 to 212 (DLLY…GFEL), 213 to 237 (ISSL…FFLL), 239 to 260 (NASY…LLPG), 262 to 285 (SESI…GFQL), 286 to 309 (FQNL…FNYV), 310 to 333 (YDLE…LLKG), 335 to 357 (SLLL…SIMS), and 358 to 384 (TTLH…CVLL). N-linked (GlcNAc...) asparagine glycosylation occurs at N92. 2 positions are modified to phosphoserine; by HT1: S100 and S102. N103 carries N-linked (GlcNAc...) asparagine glycosylation. Phosphoserine; by HT1 occurs at positions 105 and 126. 2 N-linked (GlcNAc...) asparagine glycosylation sites follow: N146 and N153. An N-linked (GlcNAc...) asparagine glycan is attached at N196. N239 carries N-linked (GlcNAc...) asparagine glycosylation. The residue at position 262 (S262) is a Phosphoserine; by HT1. N269 carries N-linked (GlcNAc...) asparagine glycosylation. At S278 the chain carries Phosphoserine; by HT1. At T280 the chain carries Phosphothreonine; by HT1. A Phosphoserine; by HT1 modification is found at S281. S325 carries the post-translational modification Phosphoserine; by HT1. N347 carries N-linked (GlcNAc...) asparagine glycosylation. N-linked (GlcNAc...) asparagine glycosylation is present at N394. LRR repeat units follow at residues 401 to 425 (WENI…TPQL), 426 to 449 (LRAN…IPTH), 450 to 474 (YPKL…LLSM), 476 to 498 (TLEE…PSSG), 499 to 521 (SRIR…VFGS), 522 to 546 (LTNL…MNDI), 548 to 570 (SLSS…LSSN), and 572 to 592 (MAFN…LKNF). Y406 is modified (phosphotyrosine; by HT1). At S410 the chain carries Phosphoserine; by HT1. The residue at position 415 (T415) is a Phosphothreonine; by HT1. S417 carries the post-translational modification Phosphoserine; by HT1. N-linked (GlcNAc...) asparagine glycosylation occurs at N432. S434 carries the phosphoserine; by HT1 modification. 3 N-linked (GlcNAc...) asparagine glycosylation sites follow: N534, N566, and N575. Phosphoserine; by HT1 is present on residues S613, S614, and S616. Residue N621 is glycosylated (N-linked (GlcNAc...) asparagine). Residues 631–651 (VIIVSCAVALIILILVAILLF) form a helical membrane-spanning segment. Residues 652 to 1053 (CICKSRRREE…KTIYEDLSSI (402 aa)) lie on the Cytoplasmic side of the membrane. The segment covering 662 to 671 (RSITGKETNR) has biased composition (basic and acidic residues). Residues 662 to 684 (RSITGKETNRRAQTIPSGSGGGM) are disordered. 2 positions are modified to phosphothreonine; by HT1: T669 and T675. 5 positions are modified to phosphoserine; by HT1: S678, S680, S698, S699, and S700. S704 carries the post-translational modification Phosphoserine. The residue at position 713 (T713) is a Phosphothreonine; by HT1. 2 positions are modified to phosphoserine; by HT1: S716 and S718. T720 carries the post-translational modification Phosphothreonine; by HT1. Phosphoserine; by HT1 is present on residues S721, S724, and S760. T764 carries the post-translational modification Phosphothreonine; by HT1. At S769 the chain carries Phosphoserine; by HT1. A Protein kinase domain is found at 770 to 1053 (RAPAEVLGRS…KTIYEDLSSI (284 aa)). ATP-binding positions include 776–784 (LGRSSHGTS) and K798. Residues T928 and T1010 each carry the phosphothreonine; by HT1 modification. S1015 bears the Phosphoserine; by HT1 mark. Phosphothreonine; by HT1 is present on T1045. Y1047 carries the post-translational modification Phosphotyrosine; by HT1. A phosphoserine; by HT1 mark is found at S1051 and S1052.

This sequence belongs to the protein kinase superfamily. Ser/Thr protein kinase family. Interacts with SLAC1 (via N-terminus). Binds to ABI2, but not ABI1. Interacts with CPK3. Phosphorylated by HT1; this phosphorylation is inhibited by MPK12 and MPK4. In terms of tissue distribution, expressed in guard cells and in the vasculature of roots and leaves.

It localises to the cell membrane. The enzyme catalyses L-seryl-[protein] + ATP = O-phospho-L-seryl-[protein] + ADP + H(+). It catalyses the reaction L-threonyl-[protein] + ATP = O-phospho-L-threonyl-[protein] + ADP + H(+). Its activity is regulated as follows. Negatively regulated by ABI2. In terms of biological role, receptor kinase acting as an early component in abscisic acid (ABA) signaling. Required for darkness, ABA, high CO(2) and hydrogen peroxide (H(2)O(2)) induction of S-type anion currents in guard cells leading to stomatal closure, possibly via the phosphorylation and activation of the anion channel SLAC1 and as a scaffolding component. Seems to act in parallel with SRK2E/OST1 in the ABA signaling pathway which regulates stomatal movement. Binds ATP. Involved in the local and/or systemic stomatal responses (e.g. stomatal closure) to light stress. This Arabidopsis thaliana (Mouse-ear cress) protein is LRR receptor-like serine/threonine-protein kinase GHR1.